A 538-amino-acid chain; its full sequence is Cytochrome P450 734A4 (538 aa).

The chain crosses the membrane as a helical span at residues 5–27 (VAVAAAVLLLLHVAARVADAVWW). Cys480 serves as a coordination point for heme.

The protein belongs to the cytochrome P450 family. It depends on heme as a cofactor. In terms of tissue distribution, expressed in roots, shoot apex, leaf sheaths, leaf blades, internodes and panicles.

The protein resides in the membrane. In terms of biological role, cytochrome P450 involved in brassinosteroids (BRs) inactivation and regulation of BRs homeostasis. Is a multifunctional and multisubstrate enzyme that controls the endogenous bioactive BR content both by direct inactivation of castasterone (CS) and by decreasing the levels of BR precursors. Catalyzes the oxidation of carbon 22 hydroxylated BR intermediates to produce C26 oxidized metabolites. This Oryza sativa subsp. japonica (Rice) protein is Cytochrome P450 734A4 (CYP734A4).